Consider the following 561-residue polypeptide: Lengsin (561 aa).

2 disordered regions span residues 1 to 78 (MNDE…WHNA) and 91 to 112 (SLPS…TRDN). Basic residues predominate over residues 26-37 (NKLKRTRRKVTK). Polar residues predominate over residues 50 to 63 (MANSREMSRNQTAD). Positions 135–229 (NHLQFVRFEA…VICDTFTVTG (95 aa)) constitute a GS beta-grasp domain. The 326-residue stretch at 236 to 561 (PRYIAKRQLR…EGNKFLEYFI (326 aa)) folds into the GS catalytic domain.

This sequence belongs to the glutamine synthetase family. Dodecamer. Interacts with BFSP2 and VIM. As to expression, expressed in lens.

Functionally, may act as a component of the cytoskeleton or as a chaperone for the reorganization of intermediate filament proteins during terminal differentiation in the lens. Does not seem to have enzymatic activity. The chain is Lengsin (Lgsn) from Rattus norvegicus (Rat).